The primary structure comprises 784 residues: PWWP domain-containing protein 2A (784 aa).

The segment covering 1–10 (MAAVAAAPGP) has biased composition (low complexity). Disordered stretches follow at residues 1–29 (MAAV…EWRL), 399–443 (DHKV…KTQL), 468–570 (EKAQ…EIQD), and 609–655 (SSAS…SKEE). A compositionally biased stretch (basic and acidic residues) spans 399–412 (DHKVNGKGQHESQK). Over residues 433-442 (PSQTSAAKTQ) the composition is skewed to polar residues. The PWWP domain maps to 684-744 (VGDIVWAKIY…LSQLAPFLEN (61 aa)).

Its subcellular location is the nucleus. In terms of biological role, H2A.Z-specific chromatin binding protein which plays an important role in the neural crest cell differentiation and/or migration during early development and is essential for the development of the head and eye. Acts as an adapter between distinct nucleosome components (H3K36me3 or H2A.Z) and chromatin-modifying complexes, contributing to the regulation of the levels of histone acetylation at actively transcribed genes. This Xenopus laevis (African clawed frog) protein is PWWP domain-containing protein 2A (pwwp2a).